A 436-amino-acid chain; its full sequence is O-phosphoseryl-tRNA(Sec) selenium transferase (436 aa).

The segment at 1–44 (MLDFNIEGLIPKNMEKRGELVLNEYLKEIEDVFNHRKIPENGID) is tetramerization. Arginine 72 is a binding site for pyridoxal 5'-phosphate. The tract at residues 93–103 (GRSGNLVDPQP) is phosphate loop (P-loop). Residues arginine 94, serine 95, and glutamine 102 each coordinate substrate. Lysine 278 is modified (N6-(pyridoxal phosphate)lysine). Arginine 307 contributes to the substrate binding site.

It belongs to the SepSecS family. In terms of assembly, homotetramer. It depends on pyridoxal 5'-phosphate as a cofactor.

The enzyme catalyses O-phospho-L-seryl-tRNA(Sec) + selenophosphate + H2O = L-selenocysteinyl-tRNA(Sec) + 2 phosphate. The protein operates within aminoacyl-tRNA biosynthesis; selenocysteinyl-tRNA(Sec) biosynthesis; selenocysteinyl-tRNA(Sec) from L-seryl-tRNA(Sec) (archaeal/eukaryal route): step 2/2. Its function is as follows. Converts O-phosphoseryl-tRNA(Sec) to selenocysteinyl-tRNA(Sec) required for selenoprotein biosynthesis. The protein is O-phosphoseryl-tRNA(Sec) selenium transferase (spcS) of Methanococcus maripaludis (strain DSM 14266 / JCM 13030 / NBRC 101832 / S2 / LL).